Consider the following 156-residue polypeptide: Small ribosomal subunit protein uS7 (156 aa).

Belongs to the universal ribosomal protein uS7 family. Part of the 30S ribosomal subunit. Contacts proteins S9 and S11.

Functionally, one of the primary rRNA binding proteins, it binds directly to 16S rRNA where it nucleates assembly of the head domain of the 30S subunit. Is located at the subunit interface close to the decoding center, probably blocks exit of the E-site tRNA. This Mycobacteroides abscessus (strain ATCC 19977 / DSM 44196 / CCUG 20993 / CIP 104536 / JCM 13569 / NCTC 13031 / TMC 1543 / L948) (Mycobacterium abscessus) protein is Small ribosomal subunit protein uS7.